The primary structure comprises 123 residues: Small ribosomal subunit protein uS12 (123 aa).

At aspartate 89 the chain carries 3-methylthioaspartic acid.

Belongs to the universal ribosomal protein uS12 family. As to quaternary structure, part of the 30S ribosomal subunit. Contacts proteins S8 and S17. May interact with IF1 in the 30S initiation complex.

Functionally, with S4 and S5 plays an important role in translational accuracy. Its function is as follows. Interacts with and stabilizes bases of the 16S rRNA that are involved in tRNA selection in the A site and with the mRNA backbone. Located at the interface of the 30S and 50S subunits, it traverses the body of the 30S subunit contacting proteins on the other side and probably holding the rRNA structure together. The combined cluster of proteins S8, S12 and S17 appears to hold together the shoulder and platform of the 30S subunit. The polypeptide is Small ribosomal subunit protein uS12 (Caulobacter sp. (strain K31)).